Reading from the N-terminus, the 189-residue chain is RxLR effector protein CRE18 (189 aa).

The N-terminal stretch at 1 to 23 (MSKLFYAFAVLAVHVLTSSPTTA) is a signal peptide. Residues 47–68 (RFLRSIHEGEDSLKPSAFSEER) carry the RxLR-dEER motif.

This sequence belongs to the RxLR effector family.

The protein resides in the secreted. Its subcellular location is the host cytoplasm. It is found in the host nucleus. Its function is as follows. Effector that is involved in host plant infection. Contributes to virulence during the early infection stage, by inhibiting plant defense responses induced by both PAMP-triggered immunity (PTI) and effector-triggered immunity (ETI). The protein is RxLR effector protein CRE18 of Phytophthora infestans (strain T30-4) (Potato late blight agent).